A 361-amino-acid chain; its full sequence is Probable dual-specificity RNA methyltransferase RlmN (361 aa).

Catalysis depends on glutamate 91, which acts as the Proton acceptor. A Radical SAM core domain is found at 97 to 329; it reads QHYGLSVCVT…KKKGGNCVVR (233 aa). Cysteine 104 and cysteine 340 are joined by a disulfide. Residues cysteine 111, cysteine 115, and cysteine 118 each coordinate [4Fe-4S] cluster. Residues 163-164, serine 195, 218-220, and asparagine 296 contribute to the S-adenosyl-L-methionine site; these read GE and SLH. The active-site S-methylcysteine intermediate is cysteine 340.

It belongs to the radical SAM superfamily. RlmN family. [4Fe-4S] cluster serves as cofactor.

It localises to the cytoplasm. The enzyme catalyses adenosine(2503) in 23S rRNA + 2 reduced [2Fe-2S]-[ferredoxin] + 2 S-adenosyl-L-methionine = 2-methyladenosine(2503) in 23S rRNA + 5'-deoxyadenosine + L-methionine + 2 oxidized [2Fe-2S]-[ferredoxin] + S-adenosyl-L-homocysteine. The catalysed reaction is adenosine(37) in tRNA + 2 reduced [2Fe-2S]-[ferredoxin] + 2 S-adenosyl-L-methionine = 2-methyladenosine(37) in tRNA + 5'-deoxyadenosine + L-methionine + 2 oxidized [2Fe-2S]-[ferredoxin] + S-adenosyl-L-homocysteine. In terms of biological role, specifically methylates position 2 of adenine 2503 in 23S rRNA and position 2 of adenine 37 in tRNAs. The protein is Probable dual-specificity RNA methyltransferase RlmN of Streptococcus pneumoniae (strain P1031).